The primary structure comprises 72 residues: MAKEEAIEIEGVILEALPNAQFKVKLENSLEVLAHVSGKIRMHYIRILPGDKVKVQISPYDISKGRITYRYK.

An S1-like domain is found at 1 to 72; the sequence is MAKEEAIEIE…SKGRITYRYK (72 aa).

This sequence belongs to the IF-1 family. In terms of assembly, component of the 30S ribosomal translation pre-initiation complex which assembles on the 30S ribosome in the order IF-2 and IF-3, IF-1 and N-formylmethionyl-tRNA(fMet); mRNA recruitment can occur at any time during PIC assembly.

The protein localises to the cytoplasm. One of the essential components for the initiation of protein synthesis. Stabilizes the binding of IF-2 and IF-3 on the 30S subunit to which N-formylmethionyl-tRNA(fMet) subsequently binds. Helps modulate mRNA selection, yielding the 30S pre-initiation complex (PIC). Upon addition of the 50S ribosomal subunit IF-1, IF-2 and IF-3 are released leaving the mature 70S translation initiation complex. The sequence is that of Translation initiation factor IF-1 from Chlorobium luteolum (strain DSM 273 / BCRC 81028 / 2530) (Pelodictyon luteolum).